The following is a 37-amino-acid chain: Neuropeptide Y2-like conopeptide (37 aa).

Tyr37 carries the tyrosine amide modification.

This sequence belongs to the NPY family. As to expression, expressed by the venom duct.

It localises to the secreted. Functionally, causes hyperactivity such as jumping, rapid circling and tail flicking, after intraventicular injection into mouse brain. The protein is Neuropeptide Y2-like conopeptide of Conus betulinus (Beech cone).